A 444-amino-acid polypeptide reads, in one-letter code: Methylenetetrahydrofolate--tRNA-(uracil-5-)-methyltransferase TrmFO (444 aa).

10–15 (GAGLAG) provides a ligand contact to FAD.

It belongs to the MnmG family. TrmFO subfamily. FAD is required as a cofactor.

The protein resides in the cytoplasm. The catalysed reaction is uridine(54) in tRNA + (6R)-5,10-methylene-5,6,7,8-tetrahydrofolate + NADH + H(+) = 5-methyluridine(54) in tRNA + (6S)-5,6,7,8-tetrahydrofolate + NAD(+). It catalyses the reaction uridine(54) in tRNA + (6R)-5,10-methylene-5,6,7,8-tetrahydrofolate + NADPH + H(+) = 5-methyluridine(54) in tRNA + (6S)-5,6,7,8-tetrahydrofolate + NADP(+). Functionally, catalyzes the folate-dependent formation of 5-methyl-uridine at position 54 (M-5-U54) in all tRNAs. This Streptococcus pneumoniae (strain ATCC 700669 / Spain 23F-1) protein is Methylenetetrahydrofolate--tRNA-(uracil-5-)-methyltransferase TrmFO.